The following is a 155-amino-acid chain: Small ribosomal subunit protein uS7c (155 aa).

The protein belongs to the universal ribosomal protein uS7 family. In terms of assembly, part of the 30S ribosomal subunit.

The protein resides in the plastid. It is found in the chloroplast. In terms of biological role, one of the primary rRNA binding proteins, it binds directly to 16S rRNA where it nucleates assembly of the head domain of the 30S subunit. The chain is Small ribosomal subunit protein uS7c (rps7) from Spathiphyllum wallisii (Peace lily).